We begin with the raw amino-acid sequence, 364 residues long: Mannose-1-phosphate guanyltransferase (364 aa).

Belongs to the transferase hexapeptide repeat family.

It is found in the cytoplasm. It catalyses the reaction alpha-D-mannose 1-phosphate + GTP + H(+) = GDP-alpha-D-mannose + diphosphate. It functions in the pathway nucleotide-sugar biosynthesis; GDP-alpha-D-mannose biosynthesis; GDP-alpha-D-mannose from alpha-D-mannose 1-phosphate (GTP route): step 1/1. In terms of biological role, involved in cell wall synthesis where it is required for glycosylation. Involved in cell cycle progression through cell-size checkpoint. In Pichia angusta (Yeast), this protein is Mannose-1-phosphate guanyltransferase (MPG1).